The sequence spans 822 residues: Aminopeptidase O (822 aa).

H480 provides a ligand contact to Zn(2+). The active-site Proton acceptor is the E481. The Zn(2+) site is built by H484 and E503. Residues 692–702 (RRPGKRQRRKR) carry the Nucleolar localization signal motif.

This sequence belongs to the peptidase M1 family. Requires Zn(2+) as cofactor.

The protein resides in the nucleus. It is found in the nucleolus. Its function is as follows. Aminopeptidase which catalyzes the hydrolysis of amino acid residues from the N-terminus of peptide or protein substrates. In Rattus norvegicus (Rat), this protein is Aminopeptidase O (Aopep).